The sequence spans 314 residues: BRCA2 and CDKN1A-interacting protein (314 aa).

Residues 1-56 (MASRSKRRAVESGVPQPPDPPVQRDEEEEKEVENEDEDDDDSDKEKDEEDEVIDEE) form a disordered region. A compositionally biased stretch (acidic residues) spans 25 to 56 (DEEEEKEVENEDEDDDDSDKEKDEEDEVIDEE). A phosphoserine mark is found at Ser-42 and Ser-112. The interval 59 to 167 (IEFEAYSLSD…EKSMVEQLDK (109 aa)) is interaction with BRCA2. The interval 161–259 (MVEQLDKFLN…NAEEEFFYEK (99 aa)) is interaction with CDKN1A. Ser-281 carries the post-translational modification Phosphoserine.

It belongs to the BCP1 family. Interacts with BRCA2, CDKN1A and MTDH/LYRIC. Isoform 2/alpha, but not isoform 1/beta, interacts with DCTN1/p150-glued and ACTR1A/ARP1. Both isoform 1 and isoform 2 interact with alpha-, beta- and gamma-tubulins. Interacts with TENT5C; the interaction has no effect on TENT5C poly(A) polymerase function. As to expression, expressed at high levels in testis and skeletal muscle and at lower levels in brain, heart, kidney, liver, lung, ovary, pancreas, placenta, and spleen.

It is found in the nucleus. The protein resides in the cytoplasm. Its subcellular location is the cytoskeleton. The protein localises to the microtubule organizing center. It localises to the centrosome. It is found in the centriole. The protein resides in the spindle pole. Functionally, during interphase, required for microtubule organizing and anchoring activities. During mitosis, required for the organization and stabilization of the spindle pole. Isoform 2/alpha is particularly important for the regulation of microtubule anchoring, microtubule stability, spindle architecture and spindle orientation, compared to isoform 1/beta. May promote cell cycle arrest by enhancing the inhibition of CDK2 activity by CDKN1A. May be required for repair of DNA damage by homologous recombination in conjunction with BRCA2. May not be involved in non-homologous end joining (NHEJ). The chain is BRCA2 and CDKN1A-interacting protein (BCCIP) from Homo sapiens (Human).